Reading from the N-terminus, the 96-residue chain is Putative pterin-4-alpha-carbinolamine dehydratase (96 aa).

Belongs to the pterin-4-alpha-carbinolamine dehydratase family.

The enzyme catalyses (4aS,6R)-4a-hydroxy-L-erythro-5,6,7,8-tetrahydrobiopterin = (6R)-L-erythro-6,7-dihydrobiopterin + H2O. In Prochlorococcus marinus (strain MIT 9301), this protein is Putative pterin-4-alpha-carbinolamine dehydratase.